Reading from the N-terminus, the 338-residue chain is Anthranilate phosphoribosyltransferase (338 aa).

Residues glycine 81, glycine 84–aspartate 85, threonine 89, asparagine 91–threonine 94, lysine 109–serine 117, and alanine 121 each bind 5-phospho-alpha-D-ribose 1-diphosphate. Glycine 81 is an anthranilate binding site. Mg(2+) is bound at residue serine 93. Anthranilate is bound at residue asparagine 112. Arginine 167 lines the anthranilate pocket. The Mg(2+) site is built by aspartate 225 and glutamate 226.

Belongs to the anthranilate phosphoribosyltransferase family. Homodimer. It depends on Mg(2+) as a cofactor.

The enzyme catalyses N-(5-phospho-beta-D-ribosyl)anthranilate + diphosphate = 5-phospho-alpha-D-ribose 1-diphosphate + anthranilate. Its pathway is amino-acid biosynthesis; L-tryptophan biosynthesis; L-tryptophan from chorismate: step 2/5. In terms of biological role, catalyzes the transfer of the phosphoribosyl group of 5-phosphorylribose-1-pyrophosphate (PRPP) to anthranilate to yield N-(5'-phosphoribosyl)-anthranilate (PRA). The chain is Anthranilate phosphoribosyltransferase from Rhizobium etli (strain ATCC 51251 / DSM 11541 / JCM 21823 / NBRC 15573 / CFN 42).